We begin with the raw amino-acid sequence, 1235 residues long: ATP-dependent helicase/nuclease subunit A (1235 aa).

Residues 12-482 (SLWTDDQWKA…IDLSQNFRSR (471 aa)) enclose the UvrD-like helicase ATP-binding domain. 33-40 (AAAGSGKT) is a binding site for ATP. Residues 509-800 (AAELTLGASF…RMMTIHASKG (292 aa)) enclose the UvrD-like helicase C-terminal domain.

Belongs to the helicase family. AddA subfamily. Heterodimer of AddA and AddB/RexB. Mg(2+) is required as a cofactor.

It catalyses the reaction Couples ATP hydrolysis with the unwinding of duplex DNA by translocating in the 3'-5' direction.. The catalysed reaction is ATP + H2O = ADP + phosphate + H(+). Functionally, the heterodimer acts as both an ATP-dependent DNA helicase and an ATP-dependent, dual-direction single-stranded exonuclease. Recognizes the chi site generating a DNA molecule suitable for the initiation of homologous recombination. The AddA nuclease domain is required for chi fragment generation; this subunit has the helicase and 3' -&gt; 5' nuclease activities. The polypeptide is ATP-dependent helicase/nuclease subunit A (Listeria monocytogenes serotype 4b (strain F2365)).